Consider the following 292-residue polypeptide: Formamidopyrimidine-DNA glycosylase (292 aa).

Pro2 (schiff-base intermediate with DNA) is an active-site residue. The active-site Proton donor is the Glu3. Catalysis depends on Lys61, which acts as the Proton donor; for beta-elimination activity. Residues His103, Arg122, and Lys168 each contribute to the DNA site. The FPG-type zinc finger occupies 254-288; it reads DAYGREGEHCRRCGAVMRREKFMNRSSFYCPRCQP. Residue Arg278 is the Proton donor; for delta-elimination activity of the active site.

The protein belongs to the FPG family. In terms of assembly, monomer. Zn(2+) is required as a cofactor.

It catalyses the reaction Hydrolysis of DNA containing ring-opened 7-methylguanine residues, releasing 2,6-diamino-4-hydroxy-5-(N-methyl)formamidopyrimidine.. It carries out the reaction 2'-deoxyribonucleotide-(2'-deoxyribose 5'-phosphate)-2'-deoxyribonucleotide-DNA = a 3'-end 2'-deoxyribonucleotide-(2,3-dehydro-2,3-deoxyribose 5'-phosphate)-DNA + a 5'-end 5'-phospho-2'-deoxyribonucleoside-DNA + H(+). Its function is as follows. Involved in base excision repair of DNA damaged by oxidation or by mutagenic agents. Acts as a DNA glycosylase that recognizes and removes damaged bases. Has a preference for oxidized purines, such as 7,8-dihydro-8-oxoguanine (8-oxoG). Has AP (apurinic/apyrimidinic) lyase activity and introduces nicks in the DNA strand. Cleaves the DNA backbone by beta-delta elimination to generate a single-strand break at the site of the removed base with both 3'- and 5'-phosphates. This Mycobacterium ulcerans (strain Agy99) protein is Formamidopyrimidine-DNA glycosylase.